The following is a 47-amino-acid chain: Protein 0.5 (47 aa).

The first 23 residues, M1 to A23, serve as a signal peptide directing secretion. A helical transmembrane segment spans residues L24 to G43.

It is found in the host membrane. The protein is Protein 0.5 of Escherichia phage T7 (Bacteriophage T7).